Reading from the N-terminus, the 251-residue chain is Large ribosomal subunit protein uL3 (251 aa).

2 disordered regions span residues 140 to 162 and 229 to 251; these read SHRS…NKKM and AAPA…EENA. Position 151 is an N5-methylglutamine (Gln151).

Belongs to the universal ribosomal protein uL3 family. As to quaternary structure, part of the 50S ribosomal subunit. Forms a cluster with proteins L14 and L19. In terms of processing, methylated by PrmB.

One of the primary rRNA binding proteins, it binds directly near the 3'-end of the 23S rRNA, where it nucleates assembly of the 50S subunit. This chain is Large ribosomal subunit protein uL3, found in Methylobacterium nodulans (strain LMG 21967 / CNCM I-2342 / ORS 2060).